Reading from the N-terminus, the 610-residue chain is 1,8-cineol synthase, chloroplastic (610 aa).

A chloroplast-targeting transit peptide spans 1 to 51 (MNHHLIITPIFHLQIMLPVATLKRPPPPAATCSIYSFSRGTPSLVSKARLS). (2E)-geranyl diphosphate-binding residues include arginine 322, aspartate 359, aspartate 363, arginine 500, and asparagine 503. Aspartate 359 and aspartate 363 together coordinate Mg(2+). The DDXXD motif motif lies at 359-363 (DDVYD). The Mg(2+) site is built by asparagine 503, threonine 507, and glutamate 511.

It belongs to the terpene synthase family. Tpsb subfamily. Monomer. It depends on Mg(2+) as a cofactor. Mn(2+) serves as cofactor. As to expression, confined to buds and flowers.

The protein localises to the plastid. It localises to the chloroplast. It carries out the reaction (2E)-geranyl diphosphate + H2O = 1,8-cineole + diphosphate. The enzyme catalyses (2E)-geranyl diphosphate = limonene + diphosphate. It catalyses the reaction (2E)-geranyl diphosphate = sabinene + diphosphate. The catalysed reaction is (2E)-geranyl diphosphate = (E)-beta-ocimene + diphosphate. It carries out the reaction (2E)-geranyl diphosphate = beta-myrcene + diphosphate. The enzyme catalyses (2E)-geranyl diphosphate = alpha-pinene + diphosphate. It catalyses the reaction (2E)-geranyl diphosphate + H2O = (S)-alpha-terpineol + diphosphate. The protein operates within secondary metabolite biosynthesis; terpenoid biosynthesis. Monoterpene synthase involved in the biosynthesis of monoterpene natural products of the 'cineole cassette', volatile compounds present in floral scent. Catalyzes the conversion of (2E)-geranyl diphosphate (GPP) into 1,8-cineole and, as minor products, limonene, sabinene, (E)-beta-ocimene, beta-myrcene, alpha-pinene and alpha-terpineol. This Nicotiana suaveolens (Australian tobacco) protein is 1,8-cineol synthase, chloroplastic.